The following is a 136-amino-acid chain: Transcription antitermination protein NusB (136 aa).

It belongs to the NusB family.

Functionally, involved in transcription antitermination. Required for transcription of ribosomal RNA (rRNA) genes. Binds specifically to the boxA antiterminator sequence of the ribosomal RNA (rrn) operons. In Arthrobacter sp. (strain FB24), this protein is Transcription antitermination protein NusB.